The primary structure comprises 192 residues: uncharacterized protein (192 aa).

Residues 29 to 160 (QRQAAVLVPV…PLDIHRRGNH (132 aa)) enclose the Nudix hydrolase domain. The Nudix box signature appears at 67-89 (GAVDDTDASLIAAALREAQEEVA). Mg(2+) contacts are provided by glutamate 83 and glutamate 87.

This sequence belongs to the Nudix hydrolase family. PCD1 subfamily. Requires Mn(2+) as cofactor. Mg(2+) serves as cofactor.

Functionally, probably mediates the hydrolysis of some nucleoside diphosphate derivatives. This is an uncharacterized protein from Cronobacter sakazakii (strain ATCC BAA-894) (Enterobacter sakazakii).